The chain runs to 215 residues: Eukaryotic translation initiation factor 4E-1 (215 aa).

A disordered region spans residues 1–35; that stretch reads MAEDTETRPASAGAEEREEGEIADDGDGSAAAAAG. Residues 16–27 are compositionally biased toward acidic residues; the sequence is EREEGEIADDGD. EIF4G-binding regions lie at residues 40-43 and 50-86; these read HPLE and FDNP…NNIH. MRNA-binding positions include 58 to 63, K90, and 108 to 109; these read RAVAWG and WE. An intrachain disulfide couples C113 to C151. The segment at 134–143 is EIF4G-binding; that stretch reads HTLLALIGEQ. Residues 158–163 and 203–207 contribute to the mRNA site; these read RKNQER and KRSDK.

This sequence belongs to the eukaryotic initiation factor 4E family. As to quaternary structure, EIF4F is a multi-subunit complex, the composition of which varies with external and internal environmental conditions. It is composed of at least EIF4A, EIF4E and EIF4G. EIF4E is also known to interact with other partners. In higher plants two isoforms of EIF4F have been identified, named isoform EIF4F and isoform EIF(iso)4F. Isoform EIF4F has subunits p220 and p26, whereas isoform EIF(iso)4F has subunits p82 and p28. In terms of assembly, (Microbial infection) Interacts with potyvirus viral genome-linked protein (VPg); this interaction is possible in susceptible hosts but impaired in resistant plants. Post-translationally, according to the redox status, the Cys-113-Cys-151 disulfide bridge may have a role in regulating protein function by affecting its ability to bind capped mRNA.

The protein resides in the nucleus. The protein localises to the cytoplasm. Its function is as follows. Component of the protein complex eIF4F, which is involved in the recognition of the mRNA cap, ATP-dependent unwinding of 5'-terminal secondary structure and recruitment of mRNA to the ribosome. Recognizes and binds the 7-methylguanosine-containing mRNA cap during an early step in the initiation of protein synthesis and facilitates ribosome binding by inducing the unwinding of the mRNAs secondary structures. Key component of recessive resistance to potyviruses and bymoviruses, including barley yellow mosaic virus and barley mild mosaic virus. In terms of biological role, (Microbial infection) Susceptibility host factor required for viral infection by recruiting viral RNAs to the host ribosomal complex via an interaction with viral genome-linked protein (VPg). The chain is Eukaryotic translation initiation factor 4E-1 from Hordeum vulgare subsp. vulgare (Domesticated barley).